We begin with the raw amino-acid sequence, 176 residues long: MLQFLNRCSKGRGAWLLMALTALVLELVALYFQHVMLLQPCVMCIYERAALFGILGASLLGAIAPKSPLRYLAIFIWIYSAWKGVQLAWTHTMLQLHPSPFTTCDFFVSFPSWLPLDKWFPAVFVASGDCAVKQWEFLSLEMPQWLVGIFAAYLFIAILVLISQFVKPKRRDLFSR.

The Cytoplasmic segment spans residues 1–14 (MLQFLNRCSKGRGA). A helical transmembrane segment spans residues 15–31 (WLLMALTALVLELVALY). Residues 32-49 (FQHVMLLQPCVMCIYERA) lie on the Periplasmic side of the membrane. Cys41 and Cys44 are disulfide-bonded. The chain crosses the membrane as a helical span at residues 50–65 (ALFGILGASLLGAIAP). Topologically, residues 66–71 (KSPLRY) are cytoplasmic. Residues 72–89 (LAIFIWIYSAWKGVQLAW) traverse the membrane as a helical segment. The Periplasmic portion of the chain corresponds to 90 to 144 (THTMLQLHPSPFTTCDFFVSFPSWLPLDKWFPAVFVASGDCAVKQWEFLSLEMPQ). A disulfide bridge links Cys104 with Cys130. A helical membrane pass occupies residues 145 to 163 (WLVGIFAAYLFIAILVLIS). At 164–176 (QFVKPKRRDLFSR) the chain is on the cytoplasmic side.

Belongs to the DsbB family.

It localises to the cell inner membrane. Required for disulfide bond formation in some periplasmic proteins. Acts by oxidizing the DsbA protein. This is Disulfide bond formation protein B from Yersinia enterocolitica serotype O:8 / biotype 1B (strain NCTC 13174 / 8081).